A 337-amino-acid chain; its full sequence is GTPase Obg (337 aa).

The 159-residue stretch at methionine 1–leucine 159 folds into the Obg domain. In terms of domain architecture, OBG-type G spans serine 160–isoleucine 329. GTP is bound by residues glycine 166–serine 173, phenylalanine 191–arginine 195, aspartate 212–glycine 215, asparagine 279–aspartate 282, and aspartate 310–aspartate 312. 2 residues coordinate Mg(2+): serine 173 and threonine 193.

Belongs to the TRAFAC class OBG-HflX-like GTPase superfamily. OBG GTPase family. Monomer. Requires Mg(2+) as cofactor.

The protein localises to the cytoplasm. Functionally, an essential GTPase which binds GTP, GDP and possibly (p)ppGpp with moderate affinity, with high nucleotide exchange rates and a fairly low GTP hydrolysis rate. Plays a role in control of the cell cycle, stress response, ribosome biogenesis and in those bacteria that undergo differentiation, in morphogenesis control. The protein is GTPase Obg of Wolbachia pipientis subsp. Culex pipiens (strain wPip).